The chain runs to 391 residues: Elongation factor Tu 2 (391 aa).

One can recognise a tr-type G domain in the interval 10-201 (KPHVNIGTIG…EVDRYIPTPE (192 aa)). The interval 19–26 (GHVDHGKT) is G1. 19 to 26 (GHVDHGKT) contributes to the GTP binding site. Residue Thr-26 participates in Mg(2+) binding. The segment at 55–59 (GITIS) is G2. The segment at 76 to 79 (DCPG) is G3. Residues 76–80 (DCPGH) and 131–134 (NKVD) contribute to the GTP site. Residues 131 to 134 (NKVD) are G4. The tract at residues 169–171 (SAL) is G5.

The protein belongs to the TRAFAC class translation factor GTPase superfamily. Classic translation factor GTPase family. EF-Tu/EF-1A subfamily. Monomer.

It is found in the cytoplasm. It catalyses the reaction GTP + H2O = GDP + phosphate + H(+). GTP hydrolase that promotes the GTP-dependent binding of aminoacyl-tRNA to the A-site of ribosomes during protein biosynthesis. The chain is Elongation factor Tu 2 from Bartonella bacilliformis (strain ATCC 35685 / KC583 / Herrer 020/F12,63).